The following is an 84-amino-acid chain: Transcription elongation factor 1 homolog (84 aa).

Zn(2+) contacts are provided by cysteine 26, cysteine 29, cysteine 50, and cysteine 53.

It belongs to the ELOF1 family.

Its subcellular location is the nucleus. In terms of biological role, transcription elongation factor implicated in the maintenance of proper chromatin structure in actively transcribed regions. This chain is Transcription elongation factor 1 homolog, found in Caenorhabditis elegans.